Here is a 216-residue protein sequence, read N- to C-terminus: Ras-related protein YPTC6 (216 aa).

G19–S26 lines the GTP pocket. The Effector region signature appears at S41–F49. GTP-binding positions include D67–Q71 and N125–D128. 2 S-geranylgeranyl cysteine lipidation sites follow: C214 and C215.

The protein belongs to the small GTPase superfamily. Rab family.

It is found in the cell membrane. This chain is Ras-related protein YPTC6 (YPTC6), found in Chlamydomonas reinhardtii (Chlamydomonas smithii).